The primary structure comprises 187 residues: UPF0232 protein MMAR_0004 (187 aa).

2 disordered regions span residues 1–77 and 166–187; these read MSDD…QPLG and ASPSWRKGPRHIAGRGPRDTYG. Over residues 14 to 30 the composition is skewed to basic and acidic residues; it reads AARDELSGMDLVRRTLA. Over residues 31-55 the composition is skewed to low complexity; sequence EARAAARARGQDPGRGFAAGPAPRR.

This sequence belongs to the UPF0232 family.

The sequence is that of UPF0232 protein MMAR_0004 from Mycobacterium marinum (strain ATCC BAA-535 / M).